The sequence spans 340 residues: Serine/threonine-protein kinase PDIK1L (340 aa).

The region spanning 8-333 (YDLIREVGRG…LELRLVQIAF (326 aa)) is the Protein kinase domain. Residues 14–22 (VGRGSYGVV) and Lys-37 contribute to the ATP site. Asp-164 functions as the Proton acceptor in the catalytic mechanism.

The protein belongs to the protein kinase superfamily. Ser/Thr protein kinase family.

It localises to the nucleus. The catalysed reaction is L-seryl-[protein] + ATP = O-phospho-L-seryl-[protein] + ADP + H(+). It catalyses the reaction L-threonyl-[protein] + ATP = O-phospho-L-threonyl-[protein] + ADP + H(+). In Pongo abelii (Sumatran orangutan), this protein is Serine/threonine-protein kinase PDIK1L (PDIK1L).